The primary structure comprises 246 residues: MKKILAEIAYDGSIYHGFQIQPTKPTVQGEIEKALMKINKKKVKIHSSGRTDKGVHAKRQIITFDIKINIQLNNLKKALNAILLKNSIKILKLRYVKNSFHPRFSAQKRKYSYCILNSDNYYPWEGYQAHYVNKKLSISNLNQMAKTLIGKHDFTTFSCIKDKSKSKFRHIYFAKFKKRGKYIIFEIIGSSFLWKMVRSIMGTMLDIEIKNESISTFETILKSKNRNLARTTAPANALFLERVYYE.

D52 serves as the catalytic Nucleophile. Y111 is a binding site for substrate.

It belongs to the tRNA pseudouridine synthase TruA family. Homodimer.

It carries out the reaction uridine(38/39/40) in tRNA = pseudouridine(38/39/40) in tRNA. In terms of biological role, formation of pseudouridine at positions 38, 39 and 40 in the anticodon stem and loop of transfer RNAs. This Borreliella burgdorferi (strain ZS7) (Borrelia burgdorferi) protein is tRNA pseudouridine synthase A.